Consider the following 70-residue polypeptide: PPF2L antigen (70 aa).

The protein is PPF2L antigen of Plasmodium falciparum (isolate Palo Alto / Uganda).